Here is a 243-residue protein sequence, read N- to C-terminus: Carboxy-S-adenosyl-L-methionine synthase (243 aa).

Residues Tyr-40, 65–67, 90–91, 118–119, Asn-133, and Arg-200 contribute to the S-adenosyl-L-methionine site; these read GSS, DN, and DI.

Belongs to the class I-like SAM-binding methyltransferase superfamily. Cx-SAM synthase family. As to quaternary structure, homodimer.

The catalysed reaction is prephenate + S-adenosyl-L-methionine = carboxy-S-adenosyl-L-methionine + 3-phenylpyruvate + H2O. Catalyzes the conversion of S-adenosyl-L-methionine (SAM) to carboxy-S-adenosyl-L-methionine (Cx-SAM). This Shewanella frigidimarina (strain NCIMB 400) protein is Carboxy-S-adenosyl-L-methionine synthase.